A 196-amino-acid polypeptide reads, in one-letter code: Probable thymidylate kinase (196 aa).

8-15 (GIDASGKT) contributes to the ATP binding site.

The protein belongs to the thymidylate kinase family.

The catalysed reaction is dTMP + ATP = dTDP + ADP. This is Probable thymidylate kinase from Metallosphaera sedula (strain ATCC 51363 / DSM 5348 / JCM 9185 / NBRC 15509 / TH2).